Reading from the N-terminus, the 503-residue chain is Probable cytosol aminopeptidase (503 aa).

Mn(2+)-binding residues include K268 and D273. K280 is a catalytic residue. D291, D350, and E352 together coordinate Mn(2+). Residue R354 is part of the active site.

The protein belongs to the peptidase M17 family. The cofactor is Mn(2+).

Its subcellular location is the cytoplasm. It catalyses the reaction Release of an N-terminal amino acid, Xaa-|-Yaa-, in which Xaa is preferably Leu, but may be other amino acids including Pro although not Arg or Lys, and Yaa may be Pro. Amino acid amides and methyl esters are also readily hydrolyzed, but rates on arylamides are exceedingly low.. It carries out the reaction Release of an N-terminal amino acid, preferentially leucine, but not glutamic or aspartic acids.. Functionally, presumably involved in the processing and regular turnover of intracellular proteins. Catalyzes the removal of unsubstituted N-terminal amino acids from various peptides. The polypeptide is Probable cytosol aminopeptidase (Nocardia farcinica (strain IFM 10152)).